Reading from the N-terminus, the 557-residue chain is Formate--tetrahydrofolate ligase 1 (557 aa).

Threonine 66–threonine 73 provides a ligand contact to ATP.

Belongs to the formate--tetrahydrofolate ligase family.

The catalysed reaction is (6S)-5,6,7,8-tetrahydrofolate + formate + ATP = (6R)-10-formyltetrahydrofolate + ADP + phosphate. The protein operates within one-carbon metabolism; tetrahydrofolate interconversion. The chain is Formate--tetrahydrofolate ligase 1 from Streptococcus sanguinis (strain SK36).